The chain runs to 151 residues: UPF0756 membrane protein LBA0919 (151 aa).

A run of 4 helical transmembrane segments spans residues 4 to 24 (WLFL…SLII), 52 to 72 (WGVT…QIGF), 78 to 98 (TFKT…AVLS), and 115 to 135 (LVLG…GPVI).

It belongs to the UPF0756 family.

Its subcellular location is the cell membrane. This chain is UPF0756 membrane protein LBA0919, found in Lactobacillus acidophilus (strain ATCC 700396 / NCK56 / N2 / NCFM).